A 306-amino-acid polypeptide reads, in one-letter code: Bifunctional protein FolD 1 (306 aa).

NADP(+) contacts are provided by residues 168-170, Ser-193, and Ile-234; that span reads GRS.

It belongs to the tetrahydrofolate dehydrogenase/cyclohydrolase family. As to quaternary structure, homodimer.

The catalysed reaction is (6R)-5,10-methylene-5,6,7,8-tetrahydrofolate + NADP(+) = (6R)-5,10-methenyltetrahydrofolate + NADPH. It carries out the reaction (6R)-5,10-methenyltetrahydrofolate + H2O = (6R)-10-formyltetrahydrofolate + H(+). The protein operates within one-carbon metabolism; tetrahydrofolate interconversion. In terms of biological role, catalyzes the oxidation of 5,10-methylenetetrahydrofolate to 5,10-methenyltetrahydrofolate and then the hydrolysis of 5,10-methenyltetrahydrofolate to 10-formyltetrahydrofolate. This chain is Bifunctional protein FolD 1, found in Rhizobium meliloti (strain 1021) (Ensifer meliloti).